A 324-amino-acid chain; its full sequence is Putative HTH-type transcriptional regulatory protein UNCMA_15260 (324 aa).

Residues 132 to 189 form the HTH cro/C1-type domain; the sequence is LRSLREAKNISLGELAMALGVSRRTISKYESGMNATIEAALKLEEILDAPIACPVNMI. Residues 143-162 constitute a DNA-binding region (H-T-H motif); that stretch reads LGELAMALGVSRRTISKYES.

The chain is Putative HTH-type transcriptional regulatory protein UNCMA_15260 from Methanocella arvoryzae (strain DSM 22066 / NBRC 105507 / MRE50).